Here is a 532-residue protein sequence, read N- to C-terminus: Glucan synthesis regulatory protein (532 aa).

A disordered region spans residues 374 to 532 (TANKRKSMAP…DAEDMKDIEI (159 aa)). Residues 381–393 (MAPSMASASGMRS) are compositionally biased toward low complexity. Over residues 447 to 457 (PTTSLTASNAS) the composition is skewed to polar residues. The span at 475 to 516 (SGEHSKEDIKVNEDSPAKERTSEDKEKKPETEANGKATESKG) shows a compositional bias: basic and acidic residues.

This sequence belongs to the KNR4/SMI1 family.

Its function is as follows. Involved in the regulation of 1,3-beta-glucan synthase activity and cell-wall formation. The polypeptide is Glucan synthesis regulatory protein (cot-2) (Neurospora crassa (strain ATCC 24698 / 74-OR23-1A / CBS 708.71 / DSM 1257 / FGSC 987)).